Consider the following 291-residue polypeptide: MTFQDLILSLQGYWAKQGCVIQQPYDCEKGAGTFNPATFLRVLGPEPWNVAYVEPSRRPTDGRYGENPNRLQHYYQFQVIMKPSPMNILDLYLDSLRSFGINPNQHDIRFVEDDWESPTLGAWGLGWEVWLDGMEITQFTYFQQAGGIDLKPVSSEITYGCERIAMYLQGVDNVYDLEWVKGVRYGDIHHESEVEFSTYNFEEADVEMLLQLFGMYEKECVRLVEKGLVLPAYDYVMKCSHTFNLLDARGAISVTERASYIGKVRNVAKLCAEGYLQMRERLGFPLLKGGR.

Belongs to the class-II aminoacyl-tRNA synthetase family. Tetramer of two alpha and two beta subunits.

It is found in the cytoplasm. It catalyses the reaction tRNA(Gly) + glycine + ATP = glycyl-tRNA(Gly) + AMP + diphosphate. The polypeptide is Glycine--tRNA ligase alpha subunit (Geotalea uraniireducens (strain Rf4) (Geobacter uraniireducens)).